The chain runs to 318 residues: Acetyl-coenzyme A carboxylase carboxyl transferase subunit alpha (318 aa).

A CoA carboxyltransferase C-terminal domain is found at 43–293 (RSQTALRDLY…GDGIAAALKS (251 aa)).

The protein belongs to the AccA family. Acetyl-CoA carboxylase is a heterohexamer composed of biotin carboxyl carrier protein (AccB), biotin carboxylase (AccC) and two subunits each of ACCase subunit alpha (AccA) and ACCase subunit beta (AccD).

Its subcellular location is the cytoplasm. The enzyme catalyses N(6)-carboxybiotinyl-L-lysyl-[protein] + acetyl-CoA = N(6)-biotinyl-L-lysyl-[protein] + malonyl-CoA. It functions in the pathway lipid metabolism; malonyl-CoA biosynthesis; malonyl-CoA from acetyl-CoA: step 1/1. Its function is as follows. Component of the acetyl coenzyme A carboxylase (ACC) complex. First, biotin carboxylase catalyzes the carboxylation of biotin on its carrier protein (BCCP) and then the CO(2) group is transferred by the carboxyltransferase to acetyl-CoA to form malonyl-CoA. This is Acetyl-coenzyme A carboxylase carboxyl transferase subunit alpha from Bartonella bacilliformis (strain ATCC 35685 / KC583 / Herrer 020/F12,63).